Reading from the N-terminus, the 239-residue chain is Ribonuclease PH (239 aa).

Phosphate-binding positions include Arg86 and 124 to 126; that span reads GTR.

Belongs to the RNase PH family. Homohexameric ring arranged as a trimer of dimers.

It catalyses the reaction tRNA(n+1) + phosphate = tRNA(n) + a ribonucleoside 5'-diphosphate. Its function is as follows. Phosphorolytic 3'-5' exoribonuclease that plays an important role in tRNA 3'-end maturation. Removes nucleotide residues following the 3'-CCA terminus of tRNAs; can also add nucleotides to the ends of RNA molecules by using nucleoside diphosphates as substrates, but this may not be physiologically important. Probably plays a role in initiation of 16S rRNA degradation (leading to ribosome degradation) during starvation. This Psychromonas ingrahamii (strain DSM 17664 / CCUG 51855 / 37) protein is Ribonuclease PH.